Consider the following 519-residue polypeptide: 4-nitrophenol 2-monooxygenase, oxygenase component (519 aa).

It belongs to the FADH(2)-utilizing monooxygenase family. As to quaternary structure, homotetramer. 4-nitrophenol 2-monooxygenase complex consists of an oxygenase component NphA1 and a flavin reductase component NphA2. FAD is required as a cofactor.

The enzyme catalyses 4-nitrophenol + NADH + O2 + H(+) = 4-nitrocatechol + NAD(+) + H2O. Partially inhibited by concentrations of FAD above 10 uM and completely inhibited by concentrations above 50 uM. Functionally, utilizes the flavins supplied by NphA2 to catalyze the degradation of 4-nitrophenol (4-NP) via 4-nitrocatechol (4-NC) which is used as the sole carbon, nitrogen, and energy source. Can also degrade phenol and 4-chlorophenol as rapidly as 4-NP. This chain is 4-nitrophenol 2-monooxygenase, oxygenase component (nphA1), found in Rhodococcus sp.